Reading from the N-terminus, the 1029-residue chain is Beta-galactosidase (1029 aa).

Substrate is bound by residues Asn-108 and Asp-207. Position 207 (Asp-207) interacts with Na(+). Residues Glu-422, His-424, and Glu-467 each coordinate Mg(2+). Residues Glu-467 and 543–546 (EYAH) contribute to the substrate site. Glu-467 serves as the catalytic Proton donor. The active-site Nucleophile is the Glu-543. Residue Asn-603 participates in Mg(2+) binding. Na(+)-binding residues include Phe-607 and Asn-610. 2 residues coordinate substrate: Asn-610 and Trp-1005.

This sequence belongs to the glycosyl hydrolase 2 family. Homotetramer. Mg(2+) is required as a cofactor. The cofactor is Na(+).

The catalysed reaction is Hydrolysis of terminal non-reducing beta-D-galactose residues in beta-D-galactosides.. This chain is Beta-galactosidase, found in Escherichia coli.